The primary structure comprises 494 residues: Voltage-gated potassium channel regulatory subunit KCNF1 (494 aa).

At 1–183 (MDGSGERSLP…KPESSCPARV (183 aa)) the chain is on the cytoplasmic side. The helical transmembrane segment at 184 to 204 (VAVLSFLLILVSSVVMCMGTI) threads the bilayer. Residues 224-244 (NVETACIGWFTLEYLLRLFSS) traverse the membrane as a helical segment. Residues 245–249 (PNKLH) are Cytoplasmic-facing. The chain crosses the membrane as a helical span at residues 250–270 (FALSFMNIVDVLAILPFYVSL). A helical; Voltage-sensor membrane pass occupies residues 290-310 (QALRIMRIARIFKLARHSSGL). Topologically, residues 311-324 (QTLTYALKRSFKEL) are cytoplasmic. Residues 325 to 345 (GLLLMYLAVGIFVFSALGYTM) traverse the membrane as a helical segment. An intramembrane region (pore-forming) is located at residues 358-378 (PQSFWWAIITMTTVGYGDIYP). A Selectivity filter motif is present at residues 370–375 (TVGYGD). The chain crosses the membrane as a helical span at residues 386-406 (NAAISFLCGVIAIALPIHPII). The Cytoplasmic segment spans residues 407 to 494 (NNFVRYYNKQ…HHRTRLQSCK (88 aa)). Residues 433–469 (NSSSGGEGKTGGSRSDLDNLPPEPAGKEAPSCSSRLK) form a disordered region.

Belongs to the potassium channel family. F (TC 1.A.1.2) subfamily. Kv5.1/KCNF1 sub-subfamily. As to quaternary structure, heterotetramer with KCNB1 or KCNB2. In terms of tissue distribution, detected in heart, brain, liver, skeletal muscle, kidney and pancreas.

The protein localises to the cell membrane. Functionally, regulatory alpha-subunit of the voltage-gated potassium (Kv) channel which, when coassembled with KCNB1 or KCNB2, can modulate their expression and their gating kinetics by acting on deactivation upon repolarization and inactivation during maintained depolarization. Accelerates inactivation but has relatively little effect on deactivation. Coexpression with KCNB1 or KCNB2 markedly slows inactivation. Each modulatory subunit has its own specific properties of regulation, and can lead to extensive inhibitions, to large changes in kinetics, and/or to large shifts in the voltage dependencies of the inactivation process. The gating kinetics depends on the nature and stoichiometry of the associated regulatory sunbunit. Fails to produce a potassium current when expressed alone. The polypeptide is Voltage-gated potassium channel regulatory subunit KCNF1 (Homo sapiens (Human)).